The sequence spans 316 residues: Alkaline ceramidase YPC1 (316 aa).

The Lumenal portion of the chain corresponds to 1 to 36; sequence MGIFRWNYPESSVPGVWGETTSTIDWCEENYVVSPY. A disulfide bridge connects residues Cys27 and Cys219. Residues 37 to 57 lie within the membrane without spanning it; the sequence is IAEWSNTLTNSVFILSAIYTT. Residues 58 to 68 lie on the Lumenal side of the membrane; the sequence is YSAYKNKLEKR. An intramembrane segment occupies 69-89; the sequence is FLLIGFGYGLVGVGSWLFHMT. Over 90 to 93 the chain is Lumenal; it reads LKYR. A helical membrane pass occupies residues 94 to 114; it reads FQLLDELPMIYAMCIPTWSLV. Residues 115 to 135 lie on the Cytoplasmic side of the membrane; it reads CEAKEALLNGDNHKKVPLFEQ. A helical transmembrane segment spans residues 136-156; the sequence is IFIGVIIGLAVTTASILYVIY. Over 157 to 160 the chain is Lumenal; the sequence is KNVD. An intramembrane segment occupies 161–181; it reads IHQILFGVQIVVVAATAGSLT. At 182-195 the chain is on the lumenal side; sequence YRYVHDPLAKRNLK. An intramembrane segment occupies 196–216; the sequence is ASMALGAILFLSGYISWLLDI. Topologically, residues 217 to 228 are lumenal; it reads HYCSFWVHVRRS. Residues 229 to 249 traverse the membrane as a helical segment; it reads ILALPLGVLLEPHGWWHILTG. At 250-316 the chain is on the cytoplasmic side; that stretch reads MGIYFYIVSL…DQSIEVKKEK (67 aa).

This sequence belongs to the alkaline ceramidase family.

It is found in the endoplasmic reticulum membrane. It catalyses the reaction N-hexanoyl-sphinganine + H2O = hexanoate + sphinganine. It carries out the reaction sphinganine + hexadecanoate = N-hexadecanoylsphinganine + H2O. The enzyme catalyses N-hexadecanoyl-(4R)-hydroxysphinganine + H2O = (4R)-hydroxysphinganine + hexadecanoate. The catalysed reaction is N-hexadecanoylsphing-4-enine + H2O = sphing-4-enine + hexadecanoate. It catalyses the reaction an N-acyl-(4R)-4-hydroxysphinganine + H2O = (4R)-hydroxysphinganine + a fatty acid. Its function is as follows. Alkaline ceramidase that hydrolyzes phytoceramide and also dihydroceramide into phytosphingosine or dihydrosphingosine. Prefers phytoceramide. Also has reverse activity as acyl-CoA-independent ceramide synthase, catalyzing synthesis of phytoceramide and dihydroceramide from palmitic acid and phytosphingosine or dihydrosphingosine. Is not responsible for the breakdown of unsaturated ceramide. Preferentially uses very long chain fatty acids (C-24 and C-26) in vivo compared to C-16 in vitro. The protein is Alkaline ceramidase YPC1 (YPC1) of Saccharomyces cerevisiae (strain ATCC 204508 / S288c) (Baker's yeast).